The primary structure comprises 265 residues: Tryptophan synthase alpha chain (265 aa).

Active-site proton acceptor residues include glutamate 49 and aspartate 60.

This sequence belongs to the TrpA family. In terms of assembly, tetramer of two alpha and two beta chains.

It carries out the reaction (1S,2R)-1-C-(indol-3-yl)glycerol 3-phosphate + L-serine = D-glyceraldehyde 3-phosphate + L-tryptophan + H2O. Its pathway is amino-acid biosynthesis; L-tryptophan biosynthesis; L-tryptophan from chorismate: step 5/5. The alpha subunit is responsible for the aldol cleavage of indoleglycerol phosphate to indole and glyceraldehyde 3-phosphate. This is Tryptophan synthase alpha chain from Desulfosudis oleivorans (strain DSM 6200 / JCM 39069 / Hxd3) (Desulfococcus oleovorans).